A 628-amino-acid polypeptide reads, in one-letter code: Leucine-rich repeat and fibronectin type-III domain-containing protein 3 (628 aa).

The N-terminal stretch at 1-16 is a signal peptide; it reads MAVLPLLLCLLPLAPA. Over 17 to 540 the chain is Extracellular; the sequence is SSPSQPATPS…APHAPFLGGT (524 aa). The LRRNT domain maps to 19–59; the sequence is PSQPATPSPCPRRCRCQTQSLPLSVLCPGAGLLFVPPSLDR. LRR repeat units lie at residues 84–105, 108–129, 132–153, 157–178, 181–202, and 205–226; these read GLLHLSLSRNTIRHVAAGAFAD, ALRALHLDGNRLTSLGEGQLRG, NLRHLILSNNQLAALAAGALDD, TLEDLDLSYNNLEQLPWEALGR, NVNTLGLDHNLLASVPAGAFSR, and KLARLDMTSNRLTTIPPDPLFS. The region spanning 249–295 is the LRRCT domain; it reads NPLHCNCELVWLRRLAREDDLEACASPPALGGRYFWAVGEEEFVCEP. Residues 295 to 382 form the Ig-like domain; the sequence is PPVVTHRSPP…GEATAAVELT (88 aa). C317 and C366 form a disulfide bridge. 2 N-linked (GlcNAc...) asparagine glycosylation sites follow: N348 and N393. The interval 380 to 432 is disordered; sequence ELTVGPPPPPQLANSTSCDPPRDGDPDALTPPSAASASAAAKAADTGPPTDRG. Low complexity predominate over residues 406–429; sequence DALTPPSAASASAAAKAADTGPPT. Residues 427 to 525 enclose the Fibronectin type-III domain; sequence PPTDRGVQVT…GCARFSTEPA (99 aa). Residues 541–561 traverse the membrane as a helical segment; it reads MIIALGGVIVASVLVFIFVLL. The Cytoplasmic segment spans residues 562-628; it reads MRYKVHGGQP…WRPSHEPTGP (67 aa). The disordered stretch occupies residues 587-628; that stretch reads QTNGSLGPTPAPPAPEPAAPRAHTVVQLDCEPWRPSHEPTGP. The span at 595 to 604 shows a compositional bias: pro residues; the sequence is TPAPPAPEPA. The segment covering 617–628 has biased composition (basic and acidic residues); sequence EPWRPSHEPTGP.

Belongs to the LRFN family. Can form heteromeric complexes with LRFN1, LRFN2, LRFN4 and LRFN5. Able to form homomeric complexes across cell junctions, between adjacent cells. Does not interact with DLG4. Post-translationally, N-glycosylated.

It is found in the cell membrane. The protein localises to the cell projection. It localises to the axon. Its subcellular location is the dendrite. The protein resides in the synapse. It is found in the presynaptic cell membrane. The protein localises to the postsynaptic cell membrane. Functionally, cell adhesion molecule that mediates homophilic cell-cell adhesion in a Ca(2+)-independent manner. Promotes neurite outgrowth in hippocampal neurons. This Ailuropoda melanoleuca (Giant panda) protein is Leucine-rich repeat and fibronectin type-III domain-containing protein 3 (LRFN3).